We begin with the raw amino-acid sequence, 939 residues long: Progesterone receptor (939 aa).

A compositionally biased stretch (basic and acidic residues) spans Met-1–Ala-11. Positions Met-1–Leu-174 are AF3; mediates transcriptional activation (in isoform B). Residues Met-1–Cys-302 form a disordered region. Residues Met-1 to Ile-572 are modulating, Ala/Pro-rich. Lys-7 is covalently cross-linked (Glycyl lysine isopeptide (Lys-Gly) (interchain with G-Cter in SUMO)). Residues Ala-15 to Glu-26 are compositionally biased toward low complexity. The residue at position 20 (Ser-20) is a Phosphoserine. The segment covering Pro-27–Arg-36 has biased composition (basic and acidic residues). Low complexity predominate over residues Ala-49–Ser-67. Ser-141 bears the Phosphoserine mark. The segment at Met-175–His-314 is mediates transcriptional transrepression (in isoform A). Positions Lys-193–Arg-197 match the Nuclear localization signal motif. Ser-200 is subject to Phosphoserine. Composition is skewed to low complexity over residues Gly-211 to Gly-230 and Pro-257 to Val-278. Residue Ser-303 is modified to Phosphoserine; by MAPK1. A Phosphoserine; by MAPK modification is found at Ser-349. A Glycyl lysine isopeptide (Lys-Gly) (interchain with G-Cter in SUMO); alternate cross-link involves residue Lys-392. Residue Lys-392 forms a Glycyl lysine isopeptide (Lys-Gly) (interchain with G-Cter in ubiquitin); alternate linkage. Residue Ser-404 is modified to Phosphoserine; by CDK2. Residues Pro-463–Arg-552 form an AF1; mediates transcriptional activation region. Lys-537 is covalently cross-linked (Glycyl lysine isopeptide (Lys-Gly) (interchain with G-Cter in SUMO)). 2 consecutive NR C4-type zinc fingers follow at residues Cys-573–Cys-593 and Cys-609–Cys-633. The nuclear receptor DNA-binding region spans Cys-573–Phe-645. Residue Ser-682 is modified to Phosphoserine. Residues Gln-685–Ile-919 enclose the NR LBD domain. An AF2; mediates transcriptional activation region spans residues Leu-693–Lys-939.

It belongs to the nuclear hormone receptor family. NR3 subfamily. As to quaternary structure, interacts with SMARD1 and UNC45A. Interacts with CUEDC2; the interaction promotes ubiquitination, decreases sumoylation, and represses transcriptional activity. Interacts with PIAS3; the interaction promotes sumoylation of PR in a hormone-dependent manner, inhibits DNA-binding, and alters nuclear export. Interacts with SP1; the interaction requires ligand-induced phosphorylation on Ser-349 by ERK1/2-MAPK. Interacts with PRMT2. Isoform A interacts with NCOR2. Isoform B (but not isoform A) interacts with NCOA2 and NCOA1. Isoform B (but not isoform A) interacts with KLF9. Interacts with GTF2B. Post-translationally, phosphorylated on multiple serine sites. Several of these sites are hormone-dependent. Phosphorylation on Ser-303 occurs preferentially on isoform B, is highly hormone-dependent and modulates ubiquitination and sumoylation on Lys-392. Phosphorylation on Ser-303 and Ser-349 also requires induction by hormone. Basal phosphorylation on Ser-200 and Ser-404 is increased in response to progesterone and can be phosphorylated in vitro by the CDK2-A1 complex. Increased levels of phosphorylation on Ser-404 also in the presence of EGF, heregulin, IGF, PMA and FBS. Phosphorylation at this site by CDK2 is ligand-independent, and increases nuclear translocation and transcriptional activity. Phosphorylation at Ser-303, but not at Ser-200, is impaired during the G(2)/M phase of the cell cycle. Phosphorylation on Ser-349 by ERK1/2 MAPK is required for interaction with SP1. In terms of processing, sumoylation is hormone-dependent and represses transcriptional activity. Sumoylation on all three sites is enhanced by PIAS3. Desumoylated by SENP1. Sumoylation on Lys-392, the main site of sumoylation, is repressed by ubiquitination on the same site, and modulated by phosphorylation at Ser-303. Ubiquitination is hormone-dependent and represses sumoylation on the same site. Promoted by MAPK-mediated phosphorylation on Ser-303. Post-translationally, palmitoylated by ZDHHC7 and ZDHHC21. Palmitoylation is required for plasma membrane targeting and for rapid intracellular signaling via ERK and AKT kinases and cAMP generation. As to expression, expressed in mammary gland and uterus.

Its subcellular location is the nucleus. It is found in the cytoplasm. In terms of biological role, the steroid hormones and their receptors are involved in the regulation of eukaryotic gene expression and affect cellular proliferation and differentiation in target tissues. Depending on the isoform, progesterone receptor functions as a transcriptional activator or repressor. Ligand-dependent transdominant repressor of steroid hormone receptor transcriptional activity including repression of its isoform B, MR and ER. Transrepressional activity may involve recruitment of corepressor NCOR2. Its function is as follows. Transcriptional activator of several progesteron-dependent promoters in a variety of cell types. Involved in activation of SRC-dependent MAPK signaling on hormone stimulation. The sequence is that of Progesterone receptor (PGR) from Canis lupus familiaris (Dog).